The following is a 343-amino-acid chain: Pentatricopeptide repeat-containing protein At1g06270 (343 aa).

PPR repeat units follow at residues 98-133 (PKIVYSSLLTYCLQSSDPLPLSFAILQRTLRSGCLP), 134-169 (NPQTHLLLSDAWLERRRGSQSVADIINEMKLIGYSP), 170-204 (DTGTCNYLVSSLCAVDKLDEAIKVVEEMSAAGCIP), 205-240 (DVESYGAVINSLCLARKTTDVVKIVKEMVSKAGISP), 241-275 (RKGMLTKVAAALRANREIWKAIEMIEFVESRDYPV), and 276-310 (EFESYEVVVEGCLEVREYILAGKVVMRMTDRGFIP).

It belongs to the PPR family. P subfamily.

In Arabidopsis thaliana (Mouse-ear cress), this protein is Pentatricopeptide repeat-containing protein At1g06270.